A 264-amino-acid polypeptide reads, in one-letter code: Thymidylate synthase (264 aa).

A dUMP-binding site is contributed by R21. H51 lines the (6R)-5,10-methylene-5,6,7,8-tetrahydrofolate pocket. Position 126-127 (126-127 (RR)) interacts with dUMP. C146 (nucleophile) is an active-site residue. DUMP is bound by residues 166–169 (RSAD), N177, and 207–209 (HLY). D169 contributes to the (6R)-5,10-methylene-5,6,7,8-tetrahydrofolate binding site. Position 263 (A263) interacts with (6R)-5,10-methylene-5,6,7,8-tetrahydrofolate.

It belongs to the thymidylate synthase family. Bacterial-type ThyA subfamily. In terms of assembly, homodimer.

Its subcellular location is the cytoplasm. It catalyses the reaction dUMP + (6R)-5,10-methylene-5,6,7,8-tetrahydrofolate = 7,8-dihydrofolate + dTMP. Its pathway is pyrimidine metabolism; dTTP biosynthesis. Functionally, catalyzes the reductive methylation of 2'-deoxyuridine-5'-monophosphate (dUMP) to 2'-deoxythymidine-5'-monophosphate (dTMP) while utilizing 5,10-methylenetetrahydrofolate (mTHF) as the methyl donor and reductant in the reaction, yielding dihydrofolate (DHF) as a by-product. This enzymatic reaction provides an intracellular de novo source of dTMP, an essential precursor for DNA biosynthesis. The sequence is that of Thymidylate synthase from Chromobacterium violaceum (strain ATCC 12472 / DSM 30191 / JCM 1249 / CCUG 213 / NBRC 12614 / NCIMB 9131 / NCTC 9757 / MK).